The following is a 524-amino-acid chain: Ankyrin repeat-containing protein At5g02620 (524 aa).

ANK repeat units follow at residues 16-45, 55-84, 90-119, 124-153, 158-187, 192-222, 226-255, and 260-289; these read RDDT…GVEL, SGET…SVLA, NGFD…ELSF, SKTT…DLAA, NGKT…GMVT, KGQT…LINS, KGNT…VSRV, and SGET…QNAR. Transmembrane regions (helical) follow at residues 349–369, 399–419, 441–461, and 472–492; these read AINS…AAIF, FLIF…VVVV, LMWM…FVVV, and VTAI…YWVI. Serine 508 is subject to Phosphoserine.

It localises to the membrane. This Arabidopsis thaliana (Mouse-ear cress) protein is Ankyrin repeat-containing protein At5g02620.